Consider the following 280-residue polypeptide: C-type lectin domain family 1 member A (280 aa).

The interval 1 to 44 (MQAKYSSTRDMLDDDGDTTMSLHSQGSATTRHPEPRRTEHRAPS) is disordered. Residues 1 to 52 (MQAKYSSTRDMLDDDGDTTMSLHSQGSATTRHPEPRRTEHRAPSSTWRPVAL) lie on the Cytoplasmic side of the membrane. Residues 18-30 (TTMSLHSQGSATT) are compositionally biased toward polar residues. The span at 31–42 (RHPEPRRTEHRA) shows a compositional bias: basic and acidic residues. Residues 53 to 73 (TLLTLCLVLLIGLAALGLLFF) form a helical; Signal-anchor for type II membrane protein membrane-spanning segment. Residues 74-280 (QYYQLSNTGQ…VPPETLGEGD (207 aa)) are Extracellular-facing. 2 N-linked (GlcNAc...) asparagine glycosylation sites follow: Asn95 and Asn169. The 115-residue stretch at 144–258 (HGDNCYQFYK…CKELKRCVCE (115 aa)) folds into the C-type lectin domain. Disulfide bonds link Cys165/Cys257 and Cys236/Cys249.

As to expression, expressed preferentially in dendritic cells.

The protein localises to the membrane. In Homo sapiens (Human), this protein is C-type lectin domain family 1 member A (CLEC1A).